Here is a 246-residue protein sequence, read N- to C-terminus: tRNA (guanine-N(7)-)-methyltransferase (246 aa).

Glu-77, Glu-102, Asp-129, and Asp-152 together coordinate S-adenosyl-L-methionine. Asp-152 is an active-site residue. Residues Lys-156, Asp-188, and 225–228 each bind substrate; that span reads TKFE.

Belongs to the class I-like SAM-binding methyltransferase superfamily. TrmB family.

It carries out the reaction guanosine(46) in tRNA + S-adenosyl-L-methionine = N(7)-methylguanosine(46) in tRNA + S-adenosyl-L-homocysteine. The protein operates within tRNA modification; N(7)-methylguanine-tRNA biosynthesis. In terms of biological role, catalyzes the formation of N(7)-methylguanine at position 46 (m7G46) in tRNA. The chain is tRNA (guanine-N(7)-)-methyltransferase from Haemophilus influenzae (strain ATCC 51907 / DSM 11121 / KW20 / Rd).